The sequence spans 300 residues: Porphobilinogen deaminase (300 aa).

At cysteine 243 the chain carries S-(dipyrrolylmethanemethyl)cysteine.

This sequence belongs to the HMBS family. As to quaternary structure, monomer. The cofactor is dipyrromethane.

The catalysed reaction is 4 porphobilinogen + H2O = hydroxymethylbilane + 4 NH4(+). The protein operates within porphyrin-containing compound metabolism; protoporphyrin-IX biosynthesis; coproporphyrinogen-III from 5-aminolevulinate: step 2/4. Functionally, tetrapolymerization of the monopyrrole PBG into the hydroxymethylbilane pre-uroporphyrinogen in several discrete steps. The chain is Porphobilinogen deaminase from Clostridium novyi (strain NT).